The following is a 98-amino-acid chain: Large ribosomal subunit protein uL23 (98 aa).

It belongs to the universal ribosomal protein uL23 family. In terms of assembly, part of the 50S ribosomal subunit. Contacts protein L29, and trigger factor when it is bound to the ribosome.

In terms of biological role, one of the early assembly proteins it binds 23S rRNA. One of the proteins that surrounds the polypeptide exit tunnel on the outside of the ribosome. Forms the main docking site for trigger factor binding to the ribosome. This is Large ribosomal subunit protein uL23 from Maricaulis maris (strain MCS10) (Caulobacter maris).